Reading from the N-terminus, the 154-residue chain is Protein X (154 aa).

The mitochondrial targeting sequence stretch occupies residues 68 to 117 (PCALRFTFARRMETTVNAHQVLPKVLHKRTLGLSAMSTTDLEAYFKDCVF).

The protein belongs to the orthohepadnavirus protein X family. In terms of assembly, may form homodimer. May interact with host CEBPA, CFLAR, CREB1, DDB1, E4F1, HBXIP, HSPD1/HSP60, NFKBIA, POLR2E and SMAD4. Interacts with host SMC5-SMC6 complex and induces its degradation. Interacts with host TRPC4AP; leading to prevent ubiquitination of TRPC4AP. Interacts with host PLSCR1; this interaction promotes ubiquitination and degradation of HBx and impairs HBx-mediated cell proliferation. Post-translationally, a fraction may be phosphorylated in insect cells and HepG2 cells, a human hepatoblastoma cell line. Phosphorylated in vitro by host protein kinase C or mitogen-activated protein kinase. N-acetylated in insect cells.

It is found in the host cytoplasm. Its subcellular location is the host nucleus. It localises to the host mitochondrion. Functionally, multifunctional protein that plays a role in silencing host antiviral defenses and promoting viral transcription. Does not seem to be essential for HBV infection. May be directly involved in development of cirrhosis and liver cancer (hepatocellular carcinoma). Most of cytosolic activities involve modulation of cytosolic calcium. The effect on apoptosis is controversial depending on the cell types in which the studies have been conducted. May induce apoptosis by localizing in mitochondria and causing loss of mitochondrial membrane potential. May also modulate apoptosis by binding host CFLAR, a key regulator of the death-inducing signaling complex (DISC). Promotes viral transcription by using the host E3 ubiquitin ligase DDB1 to target the SMC5-SMC6 complex to proteasomal degradation. This host complex would otherwise bind to viral episomal DNA, and prevents its transcription. Moderately stimulates transcription of many different viral and cellular transcription elements. Promoters and enhancers stimulated by HBx contain DNA binding sites for NF-kappa-B, AP-1, AP-2, c-EBP, ATF/CREB, or the calcium-activated factor NF-AT. The polypeptide is Protein X (Hepatitis B virus genotype C subtype ayw (isolate China/Tibet127/2002) (HBV-C)).